The chain runs to 306 residues: Elongation factor Ts (306 aa).

The segment at 81–84 (TDFV) is involved in Mg(2+) ion dislocation from EF-Tu.

It belongs to the EF-Ts family.

It is found in the cytoplasm. Its function is as follows. Associates with the EF-Tu.GDP complex and induces the exchange of GDP to GTP. It remains bound to the aminoacyl-tRNA.EF-Tu.GTP complex up to the GTP hydrolysis stage on the ribosome. The sequence is that of Elongation factor Ts from Polaromonas naphthalenivorans (strain CJ2).